The primary structure comprises 133 residues: MSNHDPISDMLTRIRNASQKKHTSTAIPASKMSLSIAKVLQKEGFITDINEEGEGYKSQIVLGLKYSGKNKFPTIRSMQRVSKPGLRVYKNTKGLPKVLGGLGVAIVSTSKGVMSDRDARKQGIGGEVLCYVY.

The protein belongs to the universal ribosomal protein uS8 family. Part of the 30S ribosomal subunit. Contacts proteins S5 and S12.

One of the primary rRNA binding proteins, it binds directly to 16S rRNA central domain where it helps coordinate assembly of the platform of the 30S subunit. The protein is Small ribosomal subunit protein uS8 of Prochlorococcus marinus subsp. pastoris (strain CCMP1986 / NIES-2087 / MED4).